Reading from the N-terminus, the 109-residue chain is Mitochondrial pyruvate carrier 1 (109 aa).

The residue at position 2 (Ala-2) is an N-acetylalanine. Over 2–20 the chain is Mitochondrial matrix; that stretch reads AGALVRKAADYVRSKDFRD. Residues 21–41 form a helical membrane-spanning segment; the sequence is YLMSTHFWGPVANWGLPIAAI. Over 42–52 the chain is Mother cell cytoplasmic; the sequence is NDMKKSPEIIS. The chain crosses the membrane as a helical span at residues 53–71; sequence GRMTFALCCYSLTFMRFAY. N6-acetyllysine is present on Lys-72. Topologically, residues 72–109 are mitochondrial matrix; sequence KVQPRNWLLFACHATNEVAQLIQGGRLIRHEMSKKASA.

Homodimer. Forms heterodimer with MPC2. The heterodimer is the more stable and dominant form.

The protein localises to the mitochondrion inner membrane. The catalysed reaction is pyruvate(out) + H(+)(out) = pyruvate(in) + H(+)(in). Functionally, mediates the uptake of pyruvate into mitochondria. This chain is Mitochondrial pyruvate carrier 1 (MPC1), found in Bos taurus (Bovine).